The sequence spans 72 residues: Brevinin-2GHb (72 aa).

An N-terminal signal peptide occupies residues 1–22 (MFTMKKSLLLLFFLGTVSLSLC). Residues 23 to 42 (EQERGADEDDGGEMTEELKR) constitute a propeptide that is removed on maturation. A disulfide bond links Cys66 and Cys72.

In terms of tissue distribution, expressed by the skin glands.

The protein resides in the secreted. Its function is as follows. Antimicrobial peptide. Active against the Gram-positive bacteria S.aureus FDA209P (MIC=16.5 ug/ml) and B.subtilis ATCC 6633 (MIC&gt;64 ug/ml), and the Gram-negative bacteria E.coli O111 (MIC=8.2 ug/ml) and E.coli ATCC 25922 (MIC=8.2 ug/ml). Not active against the fungus C.albicans. The protein is Brevinin-2GHb of Sylvirana guentheri (Gunther's frog).